A 169-amino-acid chain; its full sequence is UPF0303 protein BruAb1_1406 (169 aa).

This sequence belongs to the UPF0303 family.

This Brucella abortus biovar 1 (strain 9-941) protein is UPF0303 protein BruAb1_1406.